Consider the following 455-residue polypeptide: Beta-cyclopiazonate dehydrogenase (455 aa).

An N-terminal signal peptide occupies residues 1–25; the sequence is MAVRIARFLGLSTVAYLALANGIDA.

This sequence belongs to the beta-cyclopiazonate dehydrogenase family. FAD is required as a cofactor.

The enzyme catalyses beta-cyclopiazonate + A = alpha-cyclopiazonate + AH2. In terms of biological role, beta-cyclopiazonate dehydrogenase involved in the synthesis of the fungal neurotoxin alpha-cyclopiazonic acid (CPA). CpaO carries out the dehydrogenation of beta-CPA to yield an unstable enimine product, which is captured by intramolecular cyclization to create the pentacyclic fused scaffold of alpha-cyclopiazonate. The polypeptide is Beta-cyclopiazonate dehydrogenase (Aspergillus oryzae (strain ATCC 42149 / RIB 40) (Yellow koji mold)).